Consider the following 319-residue polypeptide: Glycine--tRNA ligase alpha subunit (319 aa).

The protein belongs to the class-II aminoacyl-tRNA synthetase family. In terms of assembly, tetramer of two alpha and two beta subunits.

The protein resides in the cytoplasm. The catalysed reaction is tRNA(Gly) + glycine + ATP = glycyl-tRNA(Gly) + AMP + diphosphate. The polypeptide is Glycine--tRNA ligase alpha subunit (Coxiella burnetii (strain CbuK_Q154) (Coxiella burnetii (strain Q154))).